Here is a 677-residue protein sequence, read N- to C-terminus: DNA ligase (677 aa).

Residues 34–38 (DAQYD), 84–85 (SL), and glutamate 118 contribute to the NAD(+) site. Lysine 120 (N6-AMP-lysine intermediate) is an active-site residue. NAD(+) contacts are provided by arginine 141, glutamate 176, lysine 283, and lysine 307. Residues cysteine 403, cysteine 406, cysteine 421, and cysteine 427 each coordinate Zn(2+). The region spanning 594–677 (ETASPISGKT…DLLKTVSNSE (84 aa)) is the BRCT domain.

This sequence belongs to the NAD-dependent DNA ligase family. LigA subfamily. Mg(2+) serves as cofactor. Mn(2+) is required as a cofactor.

The enzyme catalyses NAD(+) + (deoxyribonucleotide)n-3'-hydroxyl + 5'-phospho-(deoxyribonucleotide)m = (deoxyribonucleotide)n+m + AMP + beta-nicotinamide D-nucleotide.. Functionally, DNA ligase that catalyzes the formation of phosphodiester linkages between 5'-phosphoryl and 3'-hydroxyl groups in double-stranded DNA using NAD as a coenzyme and as the energy source for the reaction. It is essential for DNA replication and repair of damaged DNA. The polypeptide is DNA ligase (Anaplasma phagocytophilum (strain HZ)).